Here is a 118-residue protein sequence, read N- to C-terminus: NADH-ubiquinone oxidoreductase chain 3 (118 aa).

Helical transmembrane passes span 7 to 27 (ICIY…LPFL) and 87 to 107 (IDPF…IGSL).

This sequence belongs to the complex I subunit 3 family.

It localises to the mitochondrion membrane. The catalysed reaction is a ubiquinone + NADH + 5 H(+)(in) = a ubiquinol + NAD(+) + 4 H(+)(out). Core subunit of the mitochondrial membrane respiratory chain NADH dehydrogenase (Complex I) that is believed to belong to the minimal assembly required for catalysis. Complex I functions in the transfer of electrons from NADH to the respiratory chain. The immediate electron acceptor for the enzyme is believed to be ubiquinone. This Solanum tuberosum (Potato) protein is NADH-ubiquinone oxidoreductase chain 3 (ND3).